The sequence spans 280 residues: Ribosomal protein L11 methyltransferase (280 aa).

The S-adenosyl-L-methionine site is built by Thr-131, Gly-152, Asp-174, and Asn-217.

It belongs to the methyltransferase superfamily. PrmA family.

The protein localises to the cytoplasm. It carries out the reaction L-lysyl-[protein] + 3 S-adenosyl-L-methionine = N(6),N(6),N(6)-trimethyl-L-lysyl-[protein] + 3 S-adenosyl-L-homocysteine + 3 H(+). Its function is as follows. Methylates ribosomal protein L11. The polypeptide is Ribosomal protein L11 methyltransferase (Bacteroides thetaiotaomicron (strain ATCC 29148 / DSM 2079 / JCM 5827 / CCUG 10774 / NCTC 10582 / VPI-5482 / E50)).